The primary structure comprises 573 residues: Amino-acid permease inda1 (573 aa).

A run of 11 helical transmembrane segments spans residues 72–92 (MIAI…GALA), 99–117 (LFVD…VYAL), 176–200 (ITTA…ALGY), 212–229 (LAAT…VLGG), 257–280 (GFCS…LAAA), 296–315 (VFWR…GLLI), 351–371 (FMNL…VYGG), 398–415 (LPSV…YVSL), 425–444 (WLLA…VCLA), 470–494 (VYGS…AIAA), and 511–527 (YLAA…GWLW).

It belongs to the amino acid-polyamine-organocation (APC) superfamily.

The protein localises to the membrane. The protein is Amino-acid permease inda1 (inda1) of Hypocrea atroviridis (Trichoderma atroviride).